We begin with the raw amino-acid sequence, 137 residues long: Nucleoside diphosphate kinase (137 aa).

K9, F57, R85, T91, R102, and N112 together coordinate ATP. H115 (pros-phosphohistidine intermediate) is an active-site residue.

This sequence belongs to the NDK family. Homotetramer. The cofactor is Mg(2+).

The protein resides in the cytoplasm. The catalysed reaction is a 2'-deoxyribonucleoside 5'-diphosphate + ATP = a 2'-deoxyribonucleoside 5'-triphosphate + ADP. It catalyses the reaction a ribonucleoside 5'-diphosphate + ATP = a ribonucleoside 5'-triphosphate + ADP. Its function is as follows. Major role in the synthesis of nucleoside triphosphates other than ATP. The ATP gamma phosphate is transferred to the NDP beta phosphate via a ping-pong mechanism, using a phosphorylated active-site intermediate. This is Nucleoside diphosphate kinase from Campylobacter fetus subsp. fetus (strain 82-40).